Here is a 511-residue protein sequence, read N- to C-terminus: ESX-1 secretion system protein EccD1 (511 aa).

At Ser2 the chain carries N-acetylserine. At 2–143 (SAPAVAAGPT…PEFDRTALNR (142 aa)) the chain is on the cytoplasmic side. The helical transmembrane segment at 144-164 (FVGAAIPLLTAPVIGMAMRAW) threads the bilayer. The Periplasmic portion of the chain corresponds to 165–170 (WETGRS). A helical membrane pass occupies residues 171 to 191 (LWWPLAIGILGIAVLVGSFVA). Over 192–202 (NRFYQSGHLAE) the chain is Cytoplasmic. A helical transmembrane segment spans residues 203 to 223 (CLLVTTYLLIATAAALAVPLP). The Periplasmic portion of the chain corresponds to 224-227 (RGVN). The helical transmembrane segment at 228–248 (SLGAPQVAGAATAVLFLTLMT) threads the bilayer. Topologically, residues 249 to 257 (RGGPRKRHE) are cytoplasmic. The chain crosses the membrane as a helical span at residues 258 to 278 (LASFAVITAIAVIAAAAAFGY). The Periplasmic segment spans residues 279–285 (GYQDWVP). A helical transmembrane segment spans residues 286–306 (AGGIAFGLFIVTNAAKLTVAV). Over 307 to 367 (ARIALPPIPV…TERSKLAKQL (61 aa)) the chain is Cytoplasmic. The next 2 membrane-spanning stretches (helical) occupy residues 368–388 (LIGY…AVVV) and 389–409 (RGHF…VCGF). Residues 410–420 (RSRLYAERWCA) lie on the Cytoplasmic side of the membrane. Residues 421 to 441 (WALLAATVAIPTGLTAKLIIW) form a helical membrane-spanning segment. Over 442-444 (YPH) the chain is Periplasmic. The helical transmembrane segment at 445–465 (YAWLLLSVYLTVALVALVVVG) threads the bilayer. Residues 466-482 (SMAHVRRVSPVVKRTLE) are Cytoplasmic-facing. Residues 483–503 (LIDGAMIAAIIPMLLWITGVY) traverse the membrane as a helical segment. The Periplasmic portion of the chain corresponds to 504 to 511 (DTVRNIRF).

The protein belongs to the EccD/Snm4 family. Possibly a homodimer. Part of the ESX-1 / type VII secretion system (T7SS), which is composed of cytosolic and membrane components. The ESX-1 membrane complex is composed of EccB1, EccCa1, EccCb1, EccD1 and EccE1.

It is found in the cell inner membrane. Functionally, part of the ESX-1 specialized secretion system, which delivers several virulence factors to host cells during infection, including the key virulence factors EsxA (ESAT-6) and EsxB (CFP-10). The sequence is that of ESX-1 secretion system protein EccD1 from Mycobacterium tuberculosis (strain ATCC 25618 / H37Rv).